Here is a 480-residue protein sequence, read N- to C-terminus: ATP synthase subunit beta 1 (480 aa).

An ATP-binding site is contributed by 154-161 (GGAGVGKT).

This sequence belongs to the ATPase alpha/beta chains family. F-type ATPases have 2 components, CF(1) - the catalytic core - and CF(0) - the membrane proton channel. CF(1) has five subunits: alpha(3), beta(3), gamma(1), delta(1), epsilon(1). CF(0) has four main subunits: a(1), b(1), b'(1) and c(9-12).

It is found in the cell inner membrane. The catalysed reaction is ATP + H2O + 4 H(+)(in) = ADP + phosphate + 5 H(+)(out). In terms of biological role, produces ATP from ADP in the presence of a proton gradient across the membrane. The catalytic sites are hosted primarily by the beta subunits. The sequence is that of ATP synthase subunit beta 1 from Bradyrhizobium sp. (strain BTAi1 / ATCC BAA-1182).